The following is a 658-amino-acid chain: Integrator complex subunit 9 (658 aa).

The tract at residues 547-586 is disordered; it reads KDNKHVLQPPPKPVAPPGSKKRKRPAEESPETPPFKPLLS. Positions 566 to 570 match the Nuclear localization signal motif; that stretch reads KKRKR.

It belongs to the metallo-beta-lactamase superfamily. RNA-metabolizing metallo-beta-lactamase-like family. INTS9 subfamily. In terms of assembly, component of the Integrator complex, composed of core subunits INTS1, INTS2, INTS3, INTS4, INTS5, INTS6, INTS7, INTS8, INTS9/RC74, INTS10, INTS11/CPSF3L, INTS12, INTS13, INTS14 and INTS15. The core complex associates with protein phosphatase 2A subunits PPP2CA and PPP2R1A, to form the Integrator-PP2A (INTAC) complex. INTS9 is part of the RNA endonuclease subcomplex, composed of INTS4, INTS9, INTS11 and inositol hexakisphosphate (InsP6).

The protein localises to the nucleus. Its subcellular location is the cytoplasm. Functionally, component of the integrator complex, a multiprotein complex that terminates RNA polymerase II (Pol II) transcription in the promoter-proximal region of genes. The integrator complex provides a quality checkpoint during transcription elongation by driving premature transcription termination of transcripts that are unfavorably configured for transcriptional elongation: the complex terminates transcription by (1) catalyzing dephosphorylation of the C-terminal domain (CTD) of Pol II subunit POLR2A/RPB1 and SUPT5H/SPT5, (2) degrading the exiting nascent RNA transcript via endonuclease activity and (3) promoting the release of Pol II from bound DNA. The integrator complex is also involved in terminating the synthesis of non-coding Pol II transcripts, such as enhancer RNAs (eRNAs), small nuclear RNAs (snRNAs), telomerase RNAs and long non-coding RNAs (lncRNAs). This chain is Integrator complex subunit 9 (ints9), found in Xenopus laevis (African clawed frog).